The primary structure comprises 101 residues: Chaperone modulatory protein CbpM (101 aa).

The protein belongs to the CbpM family.

Functionally, interacts with CbpA and inhibits both the DnaJ-like co-chaperone activity and the DNA binding activity of CbpA. Together with CbpA, modulates the activity of the DnaK chaperone system. Does not inhibit the co-chaperone activity of DnaJ. This Pseudomonas putida (strain GB-1) protein is Chaperone modulatory protein CbpM.